The following is a 302-amino-acid chain: Ethylmalonyl-CoA decarboxylase (302 aa).

This sequence belongs to the enoyl-CoA hydratase/isomerase family.

It is found in the cytoplasm. The protein localises to the cytosol. The enzyme catalyses (2S)-ethylmalonyl-CoA + H(+) = butanoyl-CoA + CO2. It catalyses the reaction (S)-methylmalonyl-CoA + H(+) = propanoyl-CoA + CO2. The catalysed reaction is (2R)-ethylmalonyl-CoA + H(+) = butanoyl-CoA + CO2. Its function is as follows. Decarboxylates ethylmalonyl-CoA, a potentially toxic metabolite, to form butyryl-CoA, suggesting it might be involved in metabolite proofreading. Acts preferentially on (S)-ethylmalonyl-CoA but also has some activity on the (R)-isomer. Also has methylmalonyl-CoA decarboxylase activity at lower level. This Danio rerio (Zebrafish) protein is Ethylmalonyl-CoA decarboxylase (echdc1).